A 548-amino-acid polypeptide reads, in one-letter code: Glucose-6-phosphate isomerase 1 (548 aa).

Residue Glu-353 is the Proton donor of the active site. Catalysis depends on residues His-384 and Lys-512.

Belongs to the GPI family.

The protein resides in the cytoplasm. The catalysed reaction is alpha-D-glucose 6-phosphate = beta-D-fructose 6-phosphate. Its pathway is carbohydrate biosynthesis; gluconeogenesis. The protein operates within carbohydrate degradation; glycolysis; D-glyceraldehyde 3-phosphate and glycerone phosphate from D-glucose: step 2/4. Functionally, catalyzes the reversible isomerization of glucose-6-phosphate to fructose-6-phosphate. The sequence is that of Glucose-6-phosphate isomerase 1 from Neisseria gonorrhoeae (strain ATCC 700825 / FA 1090).